A 254-amino-acid polypeptide reads, in one-letter code: MTANQTKKSVPSFTSDIRQGVSNEGCLVLYSGGQDSATCLAWALEHFDRVETIGFDYGQRHKVELECRENLKQKLIQNFPDWAAHLGEDHMLDLAVLHQVSDCALTRETEIAFGEDGIPNSFVPGRNLLFFTFAATIAYRRGLRHIVGGMCETDYSGYPDCRDDTIKALQVAINLGLERRLVLHTPLMWLDKASTWQMAEEVGGKELVEIIRQESHSCYLGEREILHDWGYGCGHCPACELRAAGWESYQKSRS.

30 to 40 (YSGGQDSATCL) contributes to the ATP binding site. Cysteine 218, cysteine 233, cysteine 236, and cysteine 239 together coordinate Zn(2+).

Belongs to the QueC family. It depends on Zn(2+) as a cofactor.

The catalysed reaction is 7-carboxy-7-deazaguanine + NH4(+) + ATP = 7-cyano-7-deazaguanine + ADP + phosphate + H2O + H(+). It participates in purine metabolism; 7-cyano-7-deazaguanine biosynthesis. In terms of biological role, catalyzes the ATP-dependent conversion of 7-carboxy-7-deazaguanine (CDG) to 7-cyano-7-deazaguanine (preQ(0)). In Zymomonas mobilis subsp. mobilis (strain ATCC 31821 / ZM4 / CP4), this protein is 7-cyano-7-deazaguanine synthase.